We begin with the raw amino-acid sequence, 150 residues long: 1,4-dihydroxy-2-naphthoyl-CoA hydrolase (150 aa).

Residue Asp-19 is part of the active site.

It belongs to the 4-hydroxybenzoyl-CoA thioesterase family. DHNA-CoA hydrolase subfamily.

The catalysed reaction is 1,4-dihydroxy-2-naphthoyl-CoA + H2O = 1,4-dihydroxy-2-naphthoate + CoA + H(+). Its pathway is cofactor biosynthesis; phylloquinone biosynthesis. It functions in the pathway quinol/quinone metabolism; 1,4-dihydroxy-2-naphthoate biosynthesis; 1,4-dihydroxy-2-naphthoate from chorismate: step 7/7. Its function is as follows. Catalyzes the hydrolysis of 1,4-dihydroxy-2-naphthoyl-CoA (DHNA-CoA) to 1,4-dihydroxy-2-naphthoate (DHNA), a reaction involved in phylloquinone (vitamin K1) biosynthesis. The protein is 1,4-dihydroxy-2-naphthoyl-CoA hydrolase of Prochlorococcus marinus (strain MIT 9312).